Here is a 341-residue protein sequence, read N- to C-terminus: Heterogeneous nuclear ribonucleoproteins A2/B1 (341 aa).

RRM domains follow at residues 9 to 92 (RKLF…ESGK) and 100 to 179 (KKLF…LSRQ). A Glycyl lysine isopeptide (Lys-Gly) (interchain with G-Cter in SUMO2) cross-link involves residue Lys10. Phosphoserine is present on Ser17. Arg26 is modified (omega-N-methylarginine). Phosphoserine is present on Ser73. Position 92 is an N6,N6-dimethyllysine; alternate (Lys92). Residue Lys92 forms a Glycyl lysine isopeptide (Lys-Gly) (interchain with G-Cter in SUMO2); alternate linkage. Glycyl lysine isopeptide (Lys-Gly) (interchain with G-Cter in SUMO2) cross-links involve residues Lys100, Lys108, and Lys125. Thr128 bears the Phosphothreonine mark. Ser137 bears the Phosphoserine mark. Lys140 participates in a covalent cross-link: Glycyl lysine isopeptide (Lys-Gly) (interchain with G-Cter in SUMO2). The residue at position 147 (Thr147) is a Phosphothreonine. Glycyl lysine isopeptide (Lys-Gly) (interchain with G-Cter in SUMO2); alternate cross-links involve residues Lys156 and Lys161. Lys156 and Lys161 each carry N6-acetyllysine; alternate. Phosphothreonine is present on Thr164. A Glycyl lysine isopeptide (Lys-Gly) (interchain with G-Cter in SUMO2) cross-link involves residue Lys174. Residues Ser177 and Ser189 each carry the phosphoserine modification. Residues 181–341 (MQEVQSSRSG…SGGYGGRSRY (161 aa)) are disordered. Residues 190–211 (GRGGNFGFGDSRGGGGNFGPGP) show a composition bias toward gly residues. An Asymmetric dimethylarginine; alternate modification is found at Arg191. Arg191 carries the dimethylated arginine; alternate modification. Residue Arg191 is modified to Omega-N-methylarginine; alternate. Ser200 carries the post-translational modification Phosphoserine. Arg201 is modified (asymmetric dimethylarginine; alternate). Arg201 is modified (dimethylated arginine; alternate). Arg201 is modified (omega-N-methylarginine; alternate). A Phosphoserine modification is found at Ser213. Arg216 bears the Omega-N-methylarginine mark. A phosphoserine mark is found at Ser219 and Ser224. Arg226 bears the Omega-N-methylarginine mark. The residue at position 247 (Ser247) is a Phosphoserine. Position 254 is an asymmetric dimethylarginine; alternate (Arg254). The residue at position 254 (Arg254) is an Omega-N-methylarginine; alternate. The segment at 296-335 (QQPSNYGPMKSGNFGGSRNMGGPYGGGNYGPGGSGGSGGY) is nuclear targeting sequence. Residues 308–341 (NFGGSRNMGGPYGGGNYGPGGSGGSGGYGGRSRY) show a composition bias toward gly residues. Phosphoserine is present on Ser312. Arg313 is modified (omega-N-methylarginine). Position 319 is a phosphotyrosine (Tyr319). Ser329 and Ser332 each carry phosphoserine. The residue at position 335 (Tyr335) is a Phosphotyrosine. The residue at position 338 (Arg338) is an Omega-N-methylarginine.

Identified in the spliceosome C complex. Identified in a IGF2BP1-dependent mRNP granule complex containing untranslated mRNAs. Interacts with IGF2BP1. Interacts with C9orf72. Interacts with DGCR8. Interacts with TARDBP. Interacts with CKAP5. Interacts with PPIA/CYPA. Interacts (via C-terminus) with FAM76B; the interaction results in retention of HNRNPA2B1 in the nucleus and inhibition of the NF-kappa-B-mediated inflammatory pathway. Interacts with NF-kappa-B inhibitors NFKBIA and NFKBIE; the interaction may be mediated by the RRM2 domain of HNRNPA2B1, and HNRNPA2B1 may interact simultaneously with FAM76B and either NFKBIA or NFKBIE to form a complex. Sumoylated in exosomes, promoting miRNAs-binding. Post-translationally, asymmetric dimethylation at Arg-254 constitutes the major methylation site. According to a report, methylation affects subcellular location and promotes nuclear localization. According to another report, methylation at Arg-254 does not influence nucleocytoplasmic shuttling.

It is found in the nucleus. The protein resides in the nucleoplasm. It localises to the cytoplasmic granule. Its subcellular location is the secreted. The protein localises to the extracellular exosome. Heterogeneous nuclear ribonucleoprotein (hnRNP) that associates with nascent pre-mRNAs, packaging them into hnRNP particles. The hnRNP particle arrangement on nascent hnRNA is non-random and sequence-dependent and serves to condense and stabilize the transcripts and minimize tangling and knotting. Packaging plays a role in various processes such as transcription, pre-mRNA processing, RNA nuclear export, subcellular location, mRNA translation and stability of mature mRNAs. Forms hnRNP particles with at least 20 other different hnRNP and heterogeneous nuclear RNA in the nucleus. Involved in transport of specific mRNAs to the cytoplasm in oligodendrocytes and neurons: acts by specifically recognizing and binding the A2RE (21 nucleotide hnRNP A2 response element) or the A2RE11 (derivative 11 nucleotide oligonucleotide) sequence motifs present on some mRNAs, and promotes their transport to the cytoplasm. Specifically binds single-stranded telomeric DNA sequences, protecting telomeric DNA repeat against endonuclease digestion. Also binds other RNA molecules, such as primary miRNA (pri-miRNAs): acts as a nuclear 'reader' of the N6-methyladenosine (m6A) mark by specifically recognizing and binding a subset of nuclear m6A-containing pri-miRNAs. Binding to m6A-containing pri-miRNAs promotes pri-miRNA processing by enhancing binding of DGCR8 to pri-miRNA transcripts. Involved in miRNA sorting into exosomes following sumoylation, possibly by binding (m6A)-containing pre-miRNAs. Acts as a regulator of efficiency of mRNA splicing, possibly by binding to m6A-containing pre-mRNAs. Plays a role in the splicing of pyruvate kinase PKM by binding repressively to sequences flanking PKM exon 9, inhibiting exon 9 inclusion and resulting in exon 10 inclusion and production of the PKM M2 isoform. This chain is Heterogeneous nuclear ribonucleoproteins A2/B1 (HNRNPA2B1), found in Bos taurus (Bovine).